A 932-amino-acid polypeptide reads, in one-letter code: MYCBP-associated protein (932 aa).

2 disordered regions span residues 1–39 (MMKKITERQSPLKLLEKKRAKAPEQPTPPIQEEPEPVSN) and 165–187 (EEPKPKPPKEEERPSPWAPPPQH). The span at 165 to 178 (EEPKPKPPKEEERP) shows a compositional bias: basic and acidic residues. Ser559 carries the phosphoserine modification. Thr560 is modified (phosphothreonine). Position 566 is a phosphoserine (Ser566). The segment at 789–886 (LPDEQGQKSP…TAPSQEPIDP (98 aa)) is disordered. A compositionally biased stretch (polar residues) spans 795–806 (QKSPPVTESKVT). Basic and acidic residues predominate over residues 810–869 (AGKEDRRGGAQEKKQLGTKDKDDKRGSKTPGKEDRPNSKKLKPKDDKKVVKSASRDRLLS).

In terms of assembly, interacts with MYCBP.

The protein resides in the cytoplasm. Its subcellular location is the membrane. May play a role in spermatogenesis. May be involved in synaptic processes. The polypeptide is MYCBP-associated protein (Mus musculus (Mouse)).